A 513-amino-acid chain; its full sequence is ATP synthase subunit alpha 1 (513 aa).

169–176 provides a ligand contact to ATP; it reads GDRQTGKT.

Belongs to the ATPase alpha/beta chains family. F-type ATPases have 2 components, CF(1) - the catalytic core - and CF(0) - the membrane proton channel. CF(1) has five subunits: alpha(3), beta(3), gamma(1), delta(1), epsilon(1). CF(0) has three main subunits: a(1), b(2) and c(9-12). The alpha and beta chains form an alternating ring which encloses part of the gamma chain. CF(1) is attached to CF(0) by a central stalk formed by the gamma and epsilon chains, while a peripheral stalk is formed by the delta and b chains.

Its subcellular location is the cell inner membrane. The catalysed reaction is ATP + H2O + 4 H(+)(in) = ADP + phosphate + 5 H(+)(out). Functionally, produces ATP from ADP in the presence of a proton gradient across the membrane. The alpha chain is a regulatory subunit. This chain is ATP synthase subunit alpha 1, found in Nitrosomonas eutropha (strain DSM 101675 / C91 / Nm57).